Reading from the N-terminus, the 221-residue chain is PKHD-type hydroxylase A9601_13531 (221 aa).

Positions Leu-80–Ser-174 constitute a Fe2OG dioxygenase domain. 3 residues coordinate Fe cation: His-98, Asp-100, and His-155. Arg-165 lines the 2-oxoglutarate pocket.

It depends on Fe(2+) as a cofactor. Requires L-ascorbate as cofactor.

This Prochlorococcus marinus (strain AS9601) protein is PKHD-type hydroxylase A9601_13531.